Consider the following 369-residue polypeptide: Putative glutamate--cysteine ligase 2-1 (369 aa).

This sequence belongs to the glutamate--cysteine ligase type 2 family. YbdK subfamily.

It catalyses the reaction L-cysteine + L-glutamate + ATP = gamma-L-glutamyl-L-cysteine + ADP + phosphate + H(+). Its function is as follows. ATP-dependent carboxylate-amine ligase which exhibits weak glutamate--cysteine ligase activity. The sequence is that of Putative glutamate--cysteine ligase 2-1 from Rhodococcus jostii (strain RHA1).